An 86-amino-acid chain; its full sequence is Small ribosomal subunit protein bS16 (86 aa).

This sequence belongs to the bacterial ribosomal protein bS16 family.

The chain is Small ribosomal subunit protein bS16 from Xylella fastidiosa (strain 9a5c).